The primary structure comprises 116 residues: Non-specific lipid-transfer protein AP10 (116 aa).

The signal sequence occupies residues 1–26; it reads MKGTSMGVAILAMIVMAQLMVHPSVA. Cystine bridges form between Cys-29-Cys-76, Cys-39-Cys-53, Cys-54-Cys-98, and Cys-74-Cys-112.

It belongs to the plant LTP family. In germinating seeds, detected in the entire surface of the cotyledons, shoot meristem, inter-cotyledon space, primary xylem and immature vascular elements (at protein level). Expressed in seeds, but not the aerial parts of the plant.

Its subcellular location is the secreted. The protein localises to the extracellular space. The protein resides in the membrane. In terms of biological role, plant non-specific lipid-transfer proteins transfer phospholipids as well as galactolipids across membranes. May play a role in wax or cutin deposition in the cell walls of expanding epidermal cells and certain secretory tissues. Permeabilizes the membrane of fungal spores, inhibits germination of the spores of the fungus F.solani at a concentration of 40 ug/ml. Inhibits the growth of F.solani with an IC(50) of 6.5 ug/ml, weakly inhibits the growth of the fungus A.alternata. Binds oleoyl-CoA. The protein is Non-specific lipid-transfer protein AP10 of Helianthus annuus (Common sunflower).